We begin with the raw amino-acid sequence, 404 residues long: 2,3-bisphosphoglycerate-independent phosphoglycerate mutase (404 aa).

The segment at 155–183 is disordered; it reads LSDMIGDSDPHREGLPPEKIRPTDPSGDR. Over residues 162 to 183 the composition is skewed to basic and acidic residues; sequence SDPHREGLPPEKIRPTDPSGDR.

This sequence belongs to the BPG-independent phosphoglycerate mutase family. A-PGAM subfamily.

The enzyme catalyses (2R)-2-phosphoglycerate = (2R)-3-phosphoglycerate. It participates in carbohydrate degradation; glycolysis; pyruvate from D-glyceraldehyde 3-phosphate: step 3/5. Functionally, catalyzes the interconversion of 2-phosphoglycerate and 3-phosphoglycerate. This chain is 2,3-bisphosphoglycerate-independent phosphoglycerate mutase, found in Thermoplasma acidophilum (strain ATCC 25905 / DSM 1728 / JCM 9062 / NBRC 15155 / AMRC-C165).